The following is a 149-amino-acid chain: Large ribosomal subunit protein bL9 (149 aa).

The protein belongs to the bacterial ribosomal protein bL9 family.

Functionally, binds to the 23S rRNA. The sequence is that of Large ribosomal subunit protein bL9 from Pasteurella multocida (strain Pm70).